A 105-amino-acid polypeptide reads, in one-letter code: Large ribosomal subunit protein bL21 (105 aa).

It belongs to the bacterial ribosomal protein bL21 family. In terms of assembly, part of the 50S ribosomal subunit. Contacts protein L20.

This protein binds to 23S rRNA in the presence of protein L20. The polypeptide is Large ribosomal subunit protein bL21 (Thermotoga maritima (strain ATCC 43589 / DSM 3109 / JCM 10099 / NBRC 100826 / MSB8)).